We begin with the raw amino-acid sequence, 498 residues long: ATP synthase subunit beta, chloroplastic (498 aa).

Position 172–179 (172–179 (GGAGVGKT)) interacts with ATP.

The protein belongs to the ATPase alpha/beta chains family. F-type ATPases have 2 components, CF(1) - the catalytic core - and CF(0) - the membrane proton channel. CF(1) has five subunits: alpha(3), beta(3), gamma(1), delta(1), epsilon(1). CF(0) has four main subunits: a(1), b(1), b'(1) and c(9-12).

It is found in the plastid. Its subcellular location is the chloroplast thylakoid membrane. It carries out the reaction ATP + H2O + 4 H(+)(in) = ADP + phosphate + 5 H(+)(out). Produces ATP from ADP in the presence of a proton gradient across the membrane. The catalytic sites are hosted primarily by the beta subunits. The polypeptide is ATP synthase subunit beta, chloroplastic (Solanum bulbocastanum (Wild potato)).